We begin with the raw amino-acid sequence, 317 residues long: Ribosomal protein L11 methyltransferase (317 aa).

Positions 158, 179, 201, and 244 each coordinate S-adenosyl-L-methionine.

It belongs to the methyltransferase superfamily. PrmA family.

It localises to the cytoplasm. It carries out the reaction L-lysyl-[protein] + 3 S-adenosyl-L-methionine = N(6),N(6),N(6)-trimethyl-L-lysyl-[protein] + 3 S-adenosyl-L-homocysteine + 3 H(+). In terms of biological role, methylates ribosomal protein L11. This chain is Ribosomal protein L11 methyltransferase, found in Streptococcus pyogenes serotype M5 (strain Manfredo).